The sequence spans 229 residues: Probable septum site-determining protein MinC (229 aa).

Belongs to the MinC family. As to quaternary structure, interacts with MinD and FtsZ.

Its function is as follows. Cell division inhibitor that blocks the formation of polar Z ring septums. Rapidly oscillates between the poles of the cell to destabilize FtsZ filaments that have formed before they mature into polar Z rings. Prevents FtsZ polymerization. This is Probable septum site-determining protein MinC from Ruminiclostridium cellulolyticum (strain ATCC 35319 / DSM 5812 / JCM 6584 / H10) (Clostridium cellulolyticum).